The chain runs to 205 residues: dITP/XTP pyrophosphatase (205 aa).

Position 7–12 (7–12) interacts with substrate; the sequence is SNNRGK. Mg(2+) contacts are provided by E39 and D68. The active-site Proton acceptor is the D68. Residues A69, 154 to 157, K177, and 182 to 183 contribute to the substrate site; these read FGFD and HR.

The protein belongs to the HAM1 NTPase family. As to quaternary structure, homodimer. The cofactor is Mg(2+).

The catalysed reaction is XTP + H2O = XMP + diphosphate + H(+). It carries out the reaction dITP + H2O = dIMP + diphosphate + H(+). The enzyme catalyses ITP + H2O = IMP + diphosphate + H(+). Functionally, pyrophosphatase that catalyzes the hydrolysis of nucleoside triphosphates to their monophosphate derivatives, with a high preference for the non-canonical purine nucleotides XTP (xanthosine triphosphate), dITP (deoxyinosine triphosphate) and ITP. Seems to function as a house-cleaning enzyme that removes non-canonical purine nucleotides from the nucleotide pool, thus preventing their incorporation into DNA/RNA and avoiding chromosomal lesions. The sequence is that of dITP/XTP pyrophosphatase from Acidovorax ebreus (strain TPSY) (Diaphorobacter sp. (strain TPSY)).